The following is a 375-amino-acid chain: Deoxyhypusine synthase-like protein (375 aa).

It belongs to the deoxyhypusine synthase family.

This Elusimicrobium minutum (strain Pei191) protein is Deoxyhypusine synthase-like protein.